A 950-amino-acid chain; its full sequence is Double-stranded RNA-binding protein Staufen homolog (950 aa).

Disordered stretches follow at residues 25-168, 202-274, and 288-342; these read VSGA…QQQQ, QQQL…QPST, and VTPV…NTKE. The span at 31–43 shows a compositional bias: low complexity; that stretch reads QQRSMMSQQRGGS. Residues 45 to 66 show a composition bias toward polar residues; the sequence is AINSSKSPYQLQTSSISQFSHL. The segment covering 67–77 has biased composition (low complexity); that stretch reads QQQQQQQQQQQ. The segment covering 78-122 has biased composition (polar residues); that stretch reads LVNNYHKQKQMSPDITSHQFSSSTGGGMPTQNGNYQSMSGSSIHT. Composition is skewed to low complexity over residues 130–143, 153–168, and 202–253; these read QLSL…YSSQ, QQHH…QQQQ, and QQQL…ILQH. Positions 254–274 are enriched in polar residues; it reads SPTSGKSLSSAPHGTSVQPST. Over residues 313-322 the composition is skewed to basic and acidic residues; sequence SGRDSVHVSD. DRBM domains follow at residues 344 to 411, 435 to 546, 578 to 645, and 690 to 758; these read TPMC…ETKC, TPTV…ILKN, SEIS…ELRK, and NPIS…LLGY. Disordered regions lie at residues 758-833 and 922-950; these read YTKP…HTAS and DIHP…DFSK. Positions 765–782 are enriched in polar residues; that stretch reads PTKSSFKNPSTGEAGQTN. Basic and acidic residues predominate over residues 922 to 937; it reads DIHPGGDGPQVKKDVL.

Strongly expressed in nervous tissue (at protein level).

The protein resides in the perikaryon. It is found in the cell projection. RNA-binding protein which is required for syntaxin location in sensory neurons during long-term synaptic facilitation. Binds to syntaxin mRNA and is required to maintain its accumulation at the axon hillock following neuronal stimulation and at the opposite pole in stable unstimulated sensory neurons. The sequence is that of Double-stranded RNA-binding protein Staufen homolog from Aplysia californica (California sea hare).